A 198-amino-acid polypeptide reads, in one-letter code: tRNA (pseudouridine(54)-N(1))-methyltransferase (198 aa).

S-adenosyl-L-methionine-binding positions include L130, G153, 176 to 181 (LSPLEL), and C186.

The protein belongs to the methyltransferase superfamily. TrmY family. As to quaternary structure, homodimer.

It localises to the cytoplasm. It catalyses the reaction pseudouridine(54) in tRNA + S-adenosyl-L-methionine = N(1)-methylpseudouridine(54) in tRNA + S-adenosyl-L-homocysteine + H(+). In terms of biological role, specifically catalyzes the N1-methylation of pseudouridine at position 54 (Psi54) in tRNAs. In Methanococcus maripaludis (strain C5 / ATCC BAA-1333), this protein is tRNA (pseudouridine(54)-N(1))-methyltransferase.